The sequence spans 217 residues: Ribonuclease HII (217 aa).

An RNase H type-2 domain is found at 27–216; the sequence is SRIAGVDEAG…VKESIREGIC (190 aa). 3 residues coordinate a divalent metal cation: Asp-33, Glu-34, and Asp-126.

Belongs to the RNase HII family. Requires Mn(2+) as cofactor. Mg(2+) serves as cofactor.

Its subcellular location is the cytoplasm. The catalysed reaction is Endonucleolytic cleavage to 5'-phosphomonoester.. Its function is as follows. Endonuclease that specifically degrades the RNA of RNA-DNA hybrids. In Chlamydia muridarum (strain MoPn / Nigg), this protein is Ribonuclease HII (rnhB).